The sequence spans 225 residues: PKHD-type hydroxylase YbiX (225 aa).

Residues 78 to 177 enclose the Fe2OG dioxygenase domain; it reads TLSTPLFNRY…RVASFMWIQS (100 aa). Fe cation-binding residues include His-96, Asp-98, and His-158. A 2-oxoglutarate-binding site is contributed by Arg-168.

Requires Fe(2+) as cofactor. L-ascorbate serves as cofactor.

This Escherichia coli O6:H1 (strain CFT073 / ATCC 700928 / UPEC) protein is PKHD-type hydroxylase YbiX.